Here is a 55-residue protein sequence, read N- to C-terminus: ATP synthase F(0) complex subunit 8 (55 aa).

The chain crosses the membrane as a helical span at residues 8 to 24; the sequence is PWFSIMVMTWLTLALLI. Positions 35-55 are disordered; the sequence is NPPSKKPSLITKPTPWAWPWT.

The protein belongs to the ATPase protein 8 family. As to quaternary structure, component of the ATP synthase complex composed at least of ATP5F1A/subunit alpha, ATP5F1B/subunit beta, ATP5MC1/subunit c (homooctomer), MT-ATP6/subunit a, MT-ATP8/subunit 8, ATP5ME/subunit e, ATP5MF/subunit f, ATP5MG/subunit g, ATP5MK/subunit k, ATP5MJ/subunit j, ATP5F1C/subunit gamma, ATP5F1D/subunit delta, ATP5F1E/subunit epsilon, ATP5PF/subunit F6, ATP5PB/subunit b, ATP5PD/subunit d, ATP5PO/subunit OSCP. ATP synthase complex consists of a soluble F(1) head domain (subunits alpha(3) and beta(3)) - the catalytic core - and a membrane F(0) domain - the membrane proton channel (subunits c, a, 8, e, f, g, k and j). These two domains are linked by a central stalk (subunits gamma, delta, and epsilon) rotating inside the F1 region and a stationary peripheral stalk (subunits F6, b, d, and OSCP).

The protein localises to the mitochondrion membrane. In terms of biological role, subunit 8, of the mitochondrial membrane ATP synthase complex (F(1)F(0) ATP synthase or Complex V) that produces ATP from ADP in the presence of a proton gradient across the membrane which is generated by electron transport complexes of the respiratory chain. ATP synthase complex consist of a soluble F(1) head domain - the catalytic core - and a membrane F(1) domain - the membrane proton channel. These two domains are linked by a central stalk rotating inside the F(1) region and a stationary peripheral stalk. During catalysis, ATP synthesis in the catalytic domain of F(1) is coupled via a rotary mechanism of the central stalk subunits to proton translocation. In vivo, can only synthesize ATP although its ATP hydrolase activity can be activated artificially in vitro. Part of the complex F(0) domain. In Anas platyrhynchos (Mallard), this protein is ATP synthase F(0) complex subunit 8.